Consider the following 350-residue polypeptide: MAILSYISATSTTPPIPQDQSPNSRLPTKIILPNKKPEKWSTGVAPGEYGGPPTTTKLRKYWGGEKEDPITSTDLIWNRDFMDQMKKLFDDPNDSSLDPSPSKEKSSGFLSFSRVMSLDSMDVDLSKELASSSKSVVKNRLDTSKSEAKKQMSKAIVSPKWKLAPTRREQEKWDRATKAATGGSDVMFRELRRPRGDPEVQAAKDREQYFKLKNKIQVLTLGIGGVGLVSAYISYTPEIALSFGAGLLGSLAYMRMLGNSVDAMADGARGVAKGAANQPRLLVPVVLVMIFNRWNAILVPEYGFMHLELIPMLVGFFTYKIATFFQAIEEAISITTQKPESISPDTQASD.

A chloroplast-targeting transit peptide spans 1 to 46; it reads MAILSYISATSTTPPIPQDQSPNSRLPTKIILPNKKPEKWSTGVAP. The span at 7-26 shows a compositional bias: polar residues; that stretch reads ISATSTTPPIPQDQSPNSRL. Positions 7–58 are disordered; that stretch reads ISATSTTPPIPQDQSPNSRLPTKIILPNKKPEKWSTGVAPGEYGGPPTTTKL. Phosphoserine is present on serine 117. A run of 4 helical transmembrane segments spans residues 213 to 233, 239 to 259, 276 to 296, and 304 to 324; these read KNKI…SAYI, IALS…MLGN, ANQP…RWNA, and FMHL…IATF.

The protein localises to the plastid. The protein resides in the chloroplast thylakoid membrane. Facilitates the assembly of the membrane proton channel of the chloroplastic F-type ATPase. Specifically required for the efficient assembly and integration of the CF(0) subunit c into the chloroplastic ATPase complex in the thylakoid membrane. This is Protein CONSERVED ONLY IN THE GREEN LINEAGE 160, chloroplastic from Arabidopsis thaliana (Mouse-ear cress).